Consider the following 134-residue polypeptide: Natriuretic peptides B (134 aa).

An N-terminal signal peptide occupies residues 1-26 (MDPQTAPSRALLLLLFLHLAFLGGRS). O-linked (Xyl...) (chondroitin sulfate) serine glycosylation occurs at Ser41. An O-linked (HexNAc...) threonine; Partial glycan is attached at Thr62. O-linked (HexNAc...) serine glycans are attached at residues Ser63 and Ser70. Thr74 is a glycosylation site (O-linked (HexNAc...) threonine). O-linked (HexNAc...) serine glycosylation occurs at Ser79. O-linked (HexNAc...) threonine; Partial glycosylation is present at Thr84. O-linked (HexNAc...) threonine glycosylation occurs at Thr97. Cysteines 112 and 128 form a disulfide.

Belongs to the natriuretic peptide family. In terms of processing, the precursor molecule is proteolytically cleaved by the endoproteases FURIN or CORIN at Arg-102 to produce brain natriuretic peptide 32 and NT-proBNP. This likely occurs after it has been secreted into the blood, either during circulation or in the target cells. CORIN also cleaves the precursor molecule at additional residues including Arg-99 and possibly Lys-105. In patients with heart failure, processing and degradation of natriuretic peptides B occurs but is delayed, possibly due to a decrease in enzyme level or activity of CORIN and DPP4. Post-translationally, undergoes further proteolytic cleavage by various proteases such as DPP4, MME and possibly FAP, to give rise to a variety of shorter peptides. Cleaved at Pro-104 by the prolyl endopeptidase FAP (seprase) activity (in vitro). Degraded by IDE. During IDE degradation, the resulting products initially increase the activation of NPR1 and can also stimulate NPR2 to produce cGMP before the fragments are completely degraded and inactivated by IDE (in vitro). O-glycosylated on at least seven residues. In cardiomyocytes, glycosylation at Thr-97 is essential for the stability and processing of the extracellular natriuretic peptides B. Glycosylation, especially at Thr-97, may also be important for brain natriuretic peptide 32 stability and/or extracellular distribution. Glycosylation at Thr-97 appears to inhibit FURIN- or CORIN-mediated proteolytic processing, at least in HEK293 cells. In terms of tissue distribution, detected in the cardiac atria (at protein level). Detected in the kidney distal tubular cells (at protein level).

The protein localises to the secreted. In terms of biological role, cardiac hormone that plays a key role in mediating cardio-renal homeostasis. May also function as a paracrine antifibrotic factor in the heart. Acts by specifically binding and stimulating NPR1 to produce cGMP, which in turn activates effector proteins that drive various biological responses. Involved in regulating the extracellular fluid volume and maintaining the fluid-electrolyte balance through natriuresis, diuresis, vasorelaxation, and inhibition of renin and aldosterone secretion. Binds the clearance receptor NPR3. Its function is as follows. May affect cardio-renal homeostasis. Able to promote the production of cGMP although its potency is very low compared to brain natriuretic peptide 32. Functionally, may have a role in cardio-renal homeostasis. Able to promote the production of cGMP. The polypeptide is Natriuretic peptides B (NPPB) (Homo sapiens (Human)).